A 168-amino-acid chain; its full sequence is SsrA-binding protein (168 aa).

Belongs to the SmpB family.

It is found in the cytoplasm. Functionally, required for rescue of stalled ribosomes mediated by trans-translation. Binds to transfer-messenger RNA (tmRNA), required for stable association of tmRNA with ribosomes. tmRNA and SmpB together mimic tRNA shape, replacing the anticodon stem-loop with SmpB. tmRNA is encoded by the ssrA gene; the 2 termini fold to resemble tRNA(Ala) and it encodes a 'tag peptide', a short internal open reading frame. During trans-translation Ala-aminoacylated tmRNA acts like a tRNA, entering the A-site of stalled ribosomes, displacing the stalled mRNA. The ribosome then switches to translate the ORF on the tmRNA; the nascent peptide is terminated with the 'tag peptide' encoded by the tmRNA and targeted for degradation. The ribosome is freed to recommence translation, which seems to be the essential function of trans-translation. This is SsrA-binding protein from Mycobacterium sp. (strain JLS).